The primary structure comprises 59 residues: Potassium channel toxin alpha-KTx 1.2 (59 aa).

The signal sequence occupies residues 1–22 (MKILSVLLLALIICSIIDWSEG). Residue Gln-23 is modified to Pyrrolidone carboxylic acid. 3 cysteine pairs are disulfide-bonded: Cys-29–Cys-50, Cys-35–Cys-55, and Cys-39–Cys-57. The segment at 48-55 (GKCMNKKC) is interaction with Ca(2+)-activated K(+) channels.

It belongs to the short scorpion toxin superfamily. Potassium channel inhibitor family. Alpha-KTx 01 subfamily. Expressed by the venom gland.

The protein resides in the secreted. In terms of biological role, blocks calcium-activated potassium channels (Kd=43 nM on KCa1.1/KCNMA1). Has a potent presynaptic facilitatory action, with less effect on direct muscle stimulation. The protein is Potassium channel toxin alpha-KTx 1.2 of Leiurus hebraeus (Hebrew deathstalker scorpion).